Here is a 311-residue protein sequence, read N- to C-terminus: Progestin and adipoQ receptor family member 3 (311 aa).

The required for interaction with SREBF2 stretch occupies residues 1–20; sequence MHQKLLKSAHYIELGSYQYW. The Cytoplasmic segment spans residues 1–70; it reads MHQKLLKSAH…KSLFILSNET (70 aa). Positions 41-60 are required for interaction with SCAP; it reads KDNPYITDGYRAYLPSRLCI. Residues 61–71 are golgi targeting; it reads KSLFILSNETV. A helical membrane pass occupies residues 71 to 91; the sequence is VNIWSHLLGFFLFFTLGIYDM. The Lumenal segment spans residues 92 to 104; that stretch reads TSVLPSASASRED. Residues 105-125 traverse the membrane as a helical segment; it reads FVICSICLFCFQVCMLCSVGY. Topologically, residues 126–145 are cytoplasmic; that stretch reads HLFSCHRSEKTCRRWMALDY. The chain crosses the membrane as a helical span at residues 146–166; it reads AGISIGILGCYVSGVFYAFYC. At 167–172 the chain is on the lumenal side; sequence NNYWRQ. Residues 173-193 form a helical membrane-spanning segment; the sequence is VYLITVLAMILAVFFAQIHPS. Over 194-203 the chain is Cytoplasmic; it reads YLTQQWQRLR. A helical membrane pass occupies residues 204–224; the sequence is PIIFCSVSGYGVIPTLHWVWL. The Lumenal segment spans residues 225 to 235; it reads NGGVSAPIVQD. Residues 236-256 traverse the membrane as a helical segment; that stretch reads FAPRVIVMYVIALLAFLFYIS. Residues 257 to 275 lie on the Cytoplasmic side of the membrane; the sequence is KVPERYFPGQLNYLGSSHQ. Residues 276-296 form a helical membrane-spanning segment; it reads IWHVLAVVMLYWWHQSTVYVM. At 297 to 311 the chain is on the lumenal side; the sequence is QYRHSKPCPDYVSHL. A golgi targeting region spans residues 299-303; the sequence is RHSKP.

This sequence belongs to the ADIPOR family. In terms of assembly, interacts with SCAP and SREBF2; the interactions are direct, increase in low cholesterol conditions and tether SCAP:SREBP complex to the Golgi apparatus. Interaction with SCAP is mutually exclusive with INSIG1. In hepatocytes, interacts with PPARA and HUWE1; the interactions promote PPARA poylubiquitination and HUWE1-mediated degradation. In macrophages, interacts with PPARG and STUB1; the interactions promote PPARG poylubiquitination and STUB1-mediated degradation.

Its subcellular location is the golgi apparatus membrane. In terms of biological role, golgi-anchored protein which modulates its interactors acitivies by tethering them to the Golgi apparatus. Functions as a spatial regulator of RAF1 kinase by sequestrating it to the Golgi apparatus. Acts as a positive regulator of cholesterol biosynthesis by mediating the anchoring of the SCAP:SREBP complex in the Golgi apparatus, thereby promoting SCAP:SREBF2 complex formation, potentiating SREBF2 and SREBF1 processing and enhancing lipid synthesis. Also regulates PPARA and PPARG functions by mediating their interaction with E3 ubiquitin ligases, such as STUB1 or HUWE1, leading to their polyubiquitination and proteasome-mediated degradation. This chain is Progestin and adipoQ receptor family member 3, found in Mus musculus (Mouse).